Consider the following 445-residue polypeptide: tRNA modification GTPase MnmE (445 aa).

The (6S)-5-formyl-5,6,7,8-tetrahydrofolate site is built by Arg-20, Glu-79, and Lys-119. Residues 215-371 (GLKLAIIGPP…ILKNIENIAE (157 aa)) form the TrmE-type G domain. Asn-225 is a binding site for K(+). GTP-binding positions include 225–230 (NAGKSS), 244–250 (SNIAGTT), and 269–272 (DTAG). Ser-229 is a binding site for Mg(2+). K(+)-binding residues include Ser-244, Ile-246, and Thr-249. Thr-250 contributes to the Mg(2+) binding site. Lys-445 is a (6S)-5-formyl-5,6,7,8-tetrahydrofolate binding site.

It belongs to the TRAFAC class TrmE-Era-EngA-EngB-Septin-like GTPase superfamily. TrmE GTPase family. As to quaternary structure, homodimer. Heterotetramer of two MnmE and two MnmG subunits. K(+) is required as a cofactor.

The protein resides in the cytoplasm. Functionally, exhibits a very high intrinsic GTPase hydrolysis rate. Involved in the addition of a carboxymethylaminomethyl (cmnm) group at the wobble position (U34) of certain tRNAs, forming tRNA-cmnm(5)s(2)U34. The chain is tRNA modification GTPase MnmE from Rickettsia canadensis (strain McKiel).